The chain runs to 436 residues: MEGEAGGTLMQEAWESIDAARNYKNELQERMIALELARNQIKESAAQTCHALRQHFVDLKTAITKLLDERQETLLQEVSAIEQENIKPLDDCQKLLEQGVNTADDLLKEGEMAVSGIAGNNENLYNFTNKALHNQLDSLPEVPSLVEVPCLSAQLDEIFLCVVRDHICKLGSVASRPPVQIEELIERPGAILVKWCKCDDDFVAQDYRLQYRKNTASHFEDVYVGSESEFIVLQIDPNVDYQFRVCARGDGRQEWSPWSVLQTSRTTLVPHEWSTGYDGYSLSSRRNIALRNDSVSHGVLYSKAATYLSGQTLTFRVETVGQMDKHDGIGVCVEQFDCESLQRDKAVCVSTSGAVYVNGKEMTNQLPPVSPGSTITFDMEIMTLGQTNNEGPSQKRRVTISSSNREVVFDWLLEQSCDSLYFGCSFVHPGWKVLVF.

The stretch at 9 to 87 (LMQEAWESID…VSAIEQENIK (79 aa)) forms a coiled coil. The Fibronectin type-III domain occupies 177 to 270 (PPVQIEELIE…LQTSRTTLVP (94 aa)).

This sequence belongs to the cytokine receptor-like factor 3 family.

The protein localises to the cytoplasm. May play a role in the negative regulation of cell cycle progression. The protein is Cytokine receptor-like factor 3 (crlf3) of Xenopus laevis (African clawed frog).